Consider the following 265-residue polypeptide: Ribonuclease 3 (265 aa).

One can recognise an RNase III domain in the interval 34-157 (LAVLTRKLGY…LIGAIYLDSQ (124 aa)). E70 is a binding site for Mg(2+). D74 is a catalytic residue. Mg(2+) contacts are provided by D143 and E146. Residue E146 is part of the active site. The DRBM domain maps to 185-256 (DAKSRLQEWL…AELMINQLHK (72 aa)).

It belongs to the ribonuclease III family. Homodimer. It depends on Mg(2+) as a cofactor.

It is found in the cytoplasm. It catalyses the reaction Endonucleolytic cleavage to 5'-phosphomonoester.. Digests double-stranded RNA. Involved in the processing of primary rRNA transcript to yield the immediate precursors to the large and small rRNAs (23S and 16S). Processes some mRNAs, and tRNAs when they are encoded in the rRNA operon. Processes pre-crRNA and tracrRNA of type II CRISPR loci if present in the organism. In Psychrobacter arcticus (strain DSM 17307 / VKM B-2377 / 273-4), this protein is Ribonuclease 3.